A 284-amino-acid chain; its full sequence is RNA polymerase sigma factor RpoH (284 aa).

The segment at 54–123 (MVLAHLRFVV…IHEFILRNWR (70 aa)) is sigma-70 factor domain-2. Positions 78–81 (DLIQ) match the Interaction with polymerase core subunit RpoC motif. Residues 229-280 (ALEGLDERSRDILQQRWLSEEKATLHDLAEKYNVSAERIRQLEKNAMSKLKG) form a sigma-70 factor domain-4 region. Residues 253–272 (LHDLAEKYNVSAERIRQLEK) constitute a DNA-binding region (H-T-H motif).

Belongs to the sigma-70 factor family. RpoH subfamily. In terms of assembly, interacts with the RNA polymerase core enzyme.

Its subcellular location is the cytoplasm. Sigma factors are initiation factors that promote the attachment of RNA polymerase to specific initiation sites and are then released. This sigma factor is involved in regulation of expression of heat shock genes. This chain is RNA polymerase sigma factor RpoH, found in Pseudomonas aeruginosa (strain ATCC 15692 / DSM 22644 / CIP 104116 / JCM 14847 / LMG 12228 / 1C / PRS 101 / PAO1).